The following is a 502-amino-acid chain: Chromosomal replication initiator protein DnaA (502 aa).

The interval Met-1–Ser-112 is domain I, interacts with DnaA modulators. A domain II region spans residues Ser-113–Thr-161. The tract at residues Ser-162 to Ala-378 is domain III, AAA+ region. Gly-206, Gly-208, Lys-209, and Thr-210 together coordinate ATP. The tract at residues Ser-379 to Arg-502 is domain IV, binds dsDNA.

It belongs to the DnaA family. In terms of assembly, oligomerizes as a right-handed, spiral filament on DNA at oriC.

Its subcellular location is the cytoplasm. Plays an essential role in the initiation and regulation of chromosomal replication. ATP-DnaA binds to the origin of replication (oriC) to initiate formation of the DNA replication initiation complex once per cell cycle. Binds the DnaA box (a 9 base pair repeat at the origin) and separates the double-stranded (ds)DNA. Forms a right-handed helical filament on oriC DNA; dsDNA binds to the exterior of the filament while single-stranded (ss)DNA is stabiized in the filament's interior. The ATP-DnaA-oriC complex binds and stabilizes one strand of the AT-rich DNA unwinding element (DUE), permitting loading of DNA polymerase. After initiation quickly degrades to an ADP-DnaA complex that is not apt for DNA replication. Binds acidic phospholipids. This is Chromosomal replication initiator protein DnaA from Mycobacterium leprae (strain TN).